The sequence spans 33 residues: Protamine TP16 (33 aa).

Residues 1 to 33 (MPRRRRSSSRPVRRRRRARVSRRRRRRGRRRRR) form a disordered region.

As to expression, testis.

It localises to the nucleus. The protein localises to the chromosome. Its function is as follows. Protamines substitute for histones in the chromatin of sperm during the haploid phase of spermatogenesis. They compact sperm DNA into a highly condensed, stable and inactive complex. In Oncorhynchus mykiss (Rainbow trout), this protein is Protamine TP16.